Consider the following 1399-residue polypeptide: MKDLLNLLKNQGQVEEFDAIRIGLASPEMIRSWSFGEVKKPETINYRTFKPERDGLFCAKIFGPVKDYECLCGKYKRLKHRGVICEKCGVEVALAKVRRERMAHIELASPVAHIWFLKSLPSRIGLLMDMTLRDIERVLYFESYVVIDPGMTTLEKGQLLNDEQYFEALEEFGDDFDARMGAEAVRELLHAIDLEHEIGRLREEIPQTNSETKIKKLSKRLKLMEAFQGSGNLPEWMVLTVLPVLPPDLRPLVPLDGGRFATSDLNDLYRRVINRNNRLKRLLDLSAPDIIVRNEKRMLQEAVDALLDNGRRGRAITGSNKRPLKSLADMIKGKQGRFRQNLLGKRVDYSGRSVITVGPTLRLHQCGLPKKMALELFKPFIFGKLEMRGLATTIKAAKKMVERELPEVWDVLAEVIREHPVLLNRAPTLHRLGIQAFEPVLIEGKAIQLHPLVCAAYNADFDGDQMAVHVPLTLEAQLEARALMMSTNNILSPANGEPIIVPSQDVVLGLYYMTREAINAKGEGRVFADLQEVDRVFRAGEAALHAKIKVRINETVKDRDGSITKNTRIVDTTVGRALLFQVVPAGLPYDVVNQPMKKKAISKLINQCYRVVGLKETVIFADQLMYTGFAYSTISGVSIGVNDFVIPDEKARIIGTATDEVKEIESQYASGLVTQGEKYNKVIDLWSKANDEVSKAMMANLSKEKVIDRNGDEVEQESFNSMYMMADSGARGSAAQIRQLAGMRGLMAKPDGSIIETPITANFREGLSVLQYFISTHGARKGLADTALKTANSGYLTRRLVDVAQDLVVTEIDCGTEQGLLMTPHIEGGDVVEPLGERVLGRVIARDVFKPGTEDVIVPAGTLVDEQWVEFIELNSIDEVIVRSPINCETRYGICAKCYGRDLARGHQVNIGEAVGVIAAQSIGEPGTQLTMRTFHIGGAASRTSAADSVQVKNGGMVRLHNLKQVVRADGNLVAVSRSGELAIADEFGRERERYKLPYGAVISVKEGEKVEAGAIVAKWDPHTHPIVTELKGTVTFVGMEENITIKRQTDELTGLTNIEVMDVKDRPAAGKEIRPAIKMVDANGKDLYLPGTDVPAQYFLPANALVGVADGAQIGVGDVIARIPQETSKTRDITGGLPRVADLFEARRPKEASILAEVSGTIAFGKETKGKRRLVITPTDGSDPYEELIPKWRHLNVFEGEQVNRGEVISDGPSDPHDILRLLGVSALAKYIVNEIQDVYRLQGVKINDKHIETILRQMLRKVEIAESGDSSFIKGDQMELTQVLVENERLAAEDKFISKYTRVLLGITKASLSTESFISAASFQETTRVLTEAAVTGKRDYLRGLKENVVVGRLIPAGTGLAYHSERKRRRDADKPLRVSASEVEAALTEALNSSGN.

Zn(2+)-binding residues include C70, C72, C85, and C88. The Mg(2+) site is built by D460, D462, and D464. Positions 814, 888, 895, and 898 each coordinate Zn(2+).

This sequence belongs to the RNA polymerase beta' chain family. As to quaternary structure, the RNAP catalytic core consists of 2 alpha, 1 beta, 1 beta' and 1 omega subunit. When a sigma factor is associated with the core the holoenzyme is formed, which can initiate transcription. Mg(2+) is required as a cofactor. Zn(2+) serves as cofactor.

It carries out the reaction RNA(n) + a ribonucleoside 5'-triphosphate = RNA(n+1) + diphosphate. Its function is as follows. DNA-dependent RNA polymerase catalyzes the transcription of DNA into RNA using the four ribonucleoside triphosphates as substrates. The protein is DNA-directed RNA polymerase subunit beta' of Pseudomonas entomophila (strain L48).